The sequence spans 151 residues: Large ribosomal subunit protein uL15 (151 aa).

Residues 1-57 (MTLRLDSLKANKGARRRKLRKGRGIAAGQGASCGFGMRGQKSRSGRPTRPGFEGGQM) form a disordered region. The span at 12–23 (KGARRRKLRKGR) shows a compositional bias: basic residues. The span at 25-37 (IAAGQGASCGFGM) shows a compositional bias: gly residues.

Belongs to the universal ribosomal protein uL15 family. As to quaternary structure, part of the 50S ribosomal subunit.

Functionally, binds to the 23S rRNA. The chain is Large ribosomal subunit protein uL15 from Synechococcus sp. (strain CC9902).